We begin with the raw amino-acid sequence, 480 residues long: MNTHPQTSPNTHYKIADISLADWGRKEIDIAEHEMPGLMSIRRKYASKQPLKGVRVTGSLHMTIQTAVLIETLKDIGADVRWASCNIFSTQDHAAAAIATSGTPVFAWKGETLEEYWDCTLQALTFTLADGTLTGPELIVDDGGDATLLIHKGYELENGSTWVDEPSDSLEEQVIKRLLKRIAIERPGYWTRVVNDWKGVSEETTTGVHRLYQIAATGRLLVPAINVNDSVTKSKFDNLYGCRESLADGLKRAMDVMLAGKLAVVCGYGDVGKGSAHSLRAYGARVIVTEIDPICALQAAMEGFEVTTVEDTLGQADIYVTTTGNKDVIRIEHMTAMKDQVIVCNIGHFDNEIQVDALNALTGVQKINIKPQVDKFILPNGNTLFLLAEGRLVNLGCATGHPSFVMSNSFANQTLAQIDLWQNKDVYEKNVYRLPKKLDEEVARLHLEKIGVKLTTLTANQAAYLGISVEGPFKPEHYRY.

Substrate contacts are provided by threonine 63, aspartate 142, and glutamate 203. 204-206 (TTT) serves as a coordination point for NAD(+). Residues lysine 233 and aspartate 237 each contribute to the substrate site. Residues asparagine 238, 267-272 (GYGDVG), glutamate 290, asparagine 325, 346-348 (IGH), and asparagine 394 each bind NAD(+).

This sequence belongs to the adenosylhomocysteinase family. It depends on NAD(+) as a cofactor.

It localises to the cytoplasm. The catalysed reaction is S-adenosyl-L-homocysteine + H2O = L-homocysteine + adenosine. It participates in amino-acid biosynthesis; L-homocysteine biosynthesis; L-homocysteine from S-adenosyl-L-homocysteine: step 1/1. Its function is as follows. May play a key role in the regulation of the intracellular concentration of adenosylhomocysteine. In Xylella fastidiosa (strain Temecula1 / ATCC 700964), this protein is Adenosylhomocysteinase.